Reading from the N-terminus, the 72-residue chain is Large ribosomal subunit protein uL29 (72 aa).

This sequence belongs to the universal ribosomal protein uL29 family.

The sequence is that of Large ribosomal subunit protein uL29 from Caldicellulosiruptor bescii (strain ATCC BAA-1888 / DSM 6725 / KCTC 15123 / Z-1320) (Anaerocellum thermophilum).